The primary structure comprises 373 residues: Alanine dehydrogenase (373 aa).

2 residues coordinate substrate: Arg-15 and Lys-75. His-96 (proton donor/acceptor) is an active-site residue. Residues Ser-134, 178 to 179, Asp-198, Ser-220, 239 to 240, 267 to 270, Arg-280, and 299 to 302 contribute to the NAD(+) site; these read IV, VL, VAID, and VANI. Catalysis depends on Asp-270, which acts as the Proton donor/acceptor.

Belongs to the AlaDH/PNT family. Homohexamer. Trimer of dimer.

The protein resides in the cytoplasm. The catalysed reaction is L-alanine + NAD(+) + H2O = pyruvate + NH4(+) + NADH + H(+). It participates in amino-acid degradation; L-alanine degradation via dehydrogenase pathway; NH(3) and pyruvate from L-alanine: step 1/1. Catalyzes the reversible reductive amination of pyruvate to L-alanine. This enzyme is a key factor in the assimilation of L-alanine as an energy source through the tricarboxylic acid cycle. This chain is Alanine dehydrogenase, found in Methanococcus maripaludis (strain DSM 14266 / JCM 13030 / NBRC 101832 / S2 / LL).